The sequence spans 260 residues: Cell division protein FtsQ (260 aa).

At 1–26 the chain is on the cytoplasmic side; sequence MINKVLLEGQRITRSPQVKQHACGAS. The chain crosses the membrane as a helical span at residues 27–47; that stretch reads FFLVVLLLIGGLLYSTISWMW. Residues 48–260 lie on the Periplasmic side of the membrane; it reads DEQRLPLSKL…QELTQEKNDD (213 aa). The region spanning 52–122 is the POTRA domain; the sequence is LPLSKLVLQG…DTIKVYLTEY (71 aa).

It belongs to the FtsQ/DivIB family. FtsQ subfamily. In terms of assembly, part of a complex composed of FtsB, FtsL and FtsQ.

Its subcellular location is the cell inner membrane. Functionally, essential cell division protein. May link together the upstream cell division proteins, which are predominantly cytoplasmic, with the downstream cell division proteins, which are predominantly periplasmic. May control correct divisome assembly. The protein is Cell division protein FtsQ of Vibrio cholerae serotype O1 (strain ATCC 39315 / El Tor Inaba N16961).